Here is a 677-residue protein sequence, read N- to C-terminus: Probable potassium transport system protein Kup (677 aa).

The next 12 membrane-spanning stretches (helical) occupy residues 13-33 (GALIAIGIVFGDIGTSPLYTM), 54-74 (VSLVFWTLMLITTIKYVIIAL), 98-118 (WLLLPALIGGAALLADGTLTP), 137-157 (FIFPNNQTIVLFVVTVILLIV), 171-191 (IFGPVMLTWFLFIGFFGLVNI), 217-237 (TGIFILGSVFLATTGAEALYS), 249-269 (VSWIFVYTMLILNYMGQGAWI), 296-316 (IFGVVMAALAAIIASQALISG), 345-365 (MYIGTVNWLLCIIGLIIVWAF), 374-394 (AYGLSITITMLMTTLLLYQFI), 402-422 (ILAFFFVVIFGMIETVFLIAS), and 429-449 (GGYATLIIMVAILSVMMIWFY).

Belongs to the HAK/KUP transporter (TC 2.A.72) family.

It localises to the cell membrane. The catalysed reaction is K(+)(in) + H(+)(in) = K(+)(out) + H(+)(out). In terms of biological role, transport of potassium into the cell. Likely operates as a K(+):H(+) symporter. This Leuconostoc mesenteroides subsp. mesenteroides (strain ATCC 8293 / DSM 20343 / BCRC 11652 / CCM 1803 / JCM 6124 / NCDO 523 / NBRC 100496 / NCIMB 8023 / NCTC 12954 / NRRL B-1118 / 37Y) protein is Probable potassium transport system protein Kup.